The sequence spans 324 residues: Aspartate carbamoyltransferase catalytic subunit (324 aa).

Carbamoyl phosphate-binding residues include arginine 65 and threonine 66. Lysine 93 contributes to the L-aspartate binding site. Residues arginine 115, histidine 145, and glutamine 148 each coordinate carbamoyl phosphate. Arginine 178 and arginine 233 together coordinate L-aspartate. Residues glycine 274 and proline 275 each contribute to the carbamoyl phosphate site.

This sequence belongs to the aspartate/ornithine carbamoyltransferase superfamily. ATCase family. In terms of assembly, heterododecamer (2C3:3R2) of six catalytic PyrB chains organized as two trimers (C3), and six regulatory PyrI chains organized as three dimers (R2).

It carries out the reaction carbamoyl phosphate + L-aspartate = N-carbamoyl-L-aspartate + phosphate + H(+). It functions in the pathway pyrimidine metabolism; UMP biosynthesis via de novo pathway; (S)-dihydroorotate from bicarbonate: step 2/3. Its function is as follows. Catalyzes the condensation of carbamoyl phosphate and aspartate to form carbamoyl aspartate and inorganic phosphate, the committed step in the de novo pyrimidine nucleotide biosynthesis pathway. The chain is Aspartate carbamoyltransferase catalytic subunit from Nitrosococcus oceani (strain ATCC 19707 / BCRC 17464 / JCM 30415 / NCIMB 11848 / C-107).